The sequence spans 417 residues: Serine hydroxymethyltransferase (417 aa).

(6S)-5,6,7,8-tetrahydrofolate-binding positions include Leu-122 and Gly-126–Leu-128. The residue at position 230 (Lys-230) is an N6-(pyridoxal phosphate)lysine. (6S)-5,6,7,8-tetrahydrofolate is bound at residue Ser-355–Phe-357.

The protein belongs to the SHMT family. In terms of assembly, homodimer. It depends on pyridoxal 5'-phosphate as a cofactor.

Its subcellular location is the cytoplasm. It carries out the reaction (6R)-5,10-methylene-5,6,7,8-tetrahydrofolate + glycine + H2O = (6S)-5,6,7,8-tetrahydrofolate + L-serine. Its pathway is one-carbon metabolism; tetrahydrofolate interconversion. It participates in amino-acid biosynthesis; glycine biosynthesis; glycine from L-serine: step 1/1. Its function is as follows. Catalyzes the reversible interconversion of serine and glycine with tetrahydrofolate (THF) serving as the one-carbon carrier. This reaction serves as the major source of one-carbon groups required for the biosynthesis of purines, thymidylate, methionine, and other important biomolecules. Also exhibits THF-independent aldolase activity toward beta-hydroxyamino acids, producing glycine and aldehydes, via a retro-aldol mechanism. In Francisella philomiragia subsp. philomiragia (strain ATCC 25017 / CCUG 19701 / FSC 153 / O#319-036), this protein is Serine hydroxymethyltransferase.